The sequence spans 239 residues: 1-(5-phosphoribosyl)-5-[(5-phosphoribosylamino)methylideneamino] imidazole-4-carboxamide isomerase (239 aa).

The active-site Proton acceptor is aspartate 8. The active-site Proton donor is aspartate 130.

The protein belongs to the HisA/HisF family.

It localises to the cytoplasm. The catalysed reaction is 1-(5-phospho-beta-D-ribosyl)-5-[(5-phospho-beta-D-ribosylamino)methylideneamino]imidazole-4-carboxamide = 5-[(5-phospho-1-deoxy-D-ribulos-1-ylimino)methylamino]-1-(5-phospho-beta-D-ribosyl)imidazole-4-carboxamide. The protein operates within amino-acid biosynthesis; L-histidine biosynthesis; L-histidine from 5-phospho-alpha-D-ribose 1-diphosphate: step 4/9. The polypeptide is 1-(5-phosphoribosyl)-5-[(5-phosphoribosylamino)methylideneamino] imidazole-4-carboxamide isomerase (Lachnoclostridium phytofermentans (strain ATCC 700394 / DSM 18823 / ISDg) (Clostridium phytofermentans)).